We begin with the raw amino-acid sequence, 267 residues long: Chaperone protein MyfB (267 aa).

The signal sequence occupies residues 1–34; the sequence is MKYKFSHNFISYNLFLFVFMSLILLPYSHASSMG. Residues C127 and C164 are joined by a disulfide bond.

It belongs to the periplasmic pilus chaperone family.

The protein localises to the periplasm. Required for the biogenesis of the MyfA fimbria. This is Chaperone protein MyfB (myfB) from Yersinia enterocolitica.